The chain runs to 267 residues: MKKYRVQPDGRFELKRFDPDDTSAFEGGKQAALEALAVLNRRLEKLQELLYAEGQHKVLVVLQAMDAGGKDGTIRVVFDGVNPSGVRVASFGVPTEQELARDYLWRVHQQVPRKGELVIFNRSHYEDVLVVRVKNLVPQQVWQKRYRHIREFERMLADEGTTILKFFLHISKDEQRQRLQERLDNPEKRWKFRMGDLEDRRLWDRYQEAYEAAIRETSTEYAPWYVIPANKNWYRNWLVSHILVETLEGLAMQYPQPETASEKIVIE.

The protein belongs to the polyphosphate kinase 2 (PPK2) family. Class III subfamily. The cofactor is Mn(2+).

The enzyme catalyses [phosphate](n) + ADP = [phosphate](n+1) + AMP. It carries out the reaction [phosphate](n) + ATP = [phosphate](n+1) + ADP. In terms of biological role, uses inorganic polyphosphate (polyP) as a donor to convert both AMP to ADP and ADP to ATP. Can also use GMP, CMP, UMP, GDP, CDP and UDP. The sequence is that of AMP/ADP-polyphosphate phosphotransferase from Meiothermus ruber (strain ATCC 35948 / DSM 1279 / VKM B-1258 / 21) (Thermus ruber).